The sequence spans 225 residues: NAD(P)H-quinone oxidoreductase subunit K, chloroplastic (225 aa).

[4Fe-4S] cluster contacts are provided by cysteine 43, cysteine 44, cysteine 108, and cysteine 139.

Belongs to the complex I 20 kDa subunit family. As to quaternary structure, NDH is composed of at least 16 different subunits, 5 of which are encoded in the nucleus. The cofactor is [4Fe-4S] cluster.

The protein localises to the plastid. It localises to the chloroplast thylakoid membrane. The catalysed reaction is a plastoquinone + NADH + (n+1) H(+)(in) = a plastoquinol + NAD(+) + n H(+)(out). It carries out the reaction a plastoquinone + NADPH + (n+1) H(+)(in) = a plastoquinol + NADP(+) + n H(+)(out). In terms of biological role, NDH shuttles electrons from NAD(P)H:plastoquinone, via FMN and iron-sulfur (Fe-S) centers, to quinones in the photosynthetic chain and possibly in a chloroplast respiratory chain. The immediate electron acceptor for the enzyme in this species is believed to be plastoquinone. Couples the redox reaction to proton translocation, and thus conserves the redox energy in a proton gradient. This chain is NAD(P)H-quinone oxidoreductase subunit K, chloroplastic, found in Hordeum vulgare (Barley).